The following is an 83-amino-acid chain: UPF0512 protein G (83 aa).

Belongs to the UPF0512 family.

The protein is UPF0512 protein G of Dictyostelium discoideum (Social amoeba).